Here is a 64-residue protein sequence, read N- to C-terminus: Sperm protamine P1 (64 aa).

A disordered region spans residues 1 to 64; sequence MVRYRRHSRS…QSRRRRRRRY (64 aa).

This sequence belongs to the protamine P1 family. In terms of tissue distribution, testis.

It is found in the nucleus. Its subcellular location is the chromosome. Its function is as follows. Protamines substitute for histones in the chromatin of sperm during the haploid phase of spermatogenesis. They compact sperm DNA into a highly condensed, stable and inactive complex. The sequence is that of Sperm protamine P1 (PRM1) from Dromiciops gliroides (Monito del Monte).